Here is a 424-residue protein sequence, read N- to C-terminus: Elongation factor Tu, mitochondrial (424 aa).

The tr-type G domain maps to 36-234; sequence KPHVNVGTIG…VLDTKIPLPH (199 aa). A G1 region spans residues 45 to 52; it reads GHVDHGKT. 45-52 is a binding site for GTP; the sequence is GHVDHGKT. A G2 region spans residues 86–90; that stretch reads GITIT. The interval 107 to 110 is G3; the sequence is DCPG. GTP contacts are provided by residues 107–111 and 162–165; these read DCPGH and NKMD. Residues 162-165 form a G4 region; the sequence is NKMD. Positions 199-201 are G5; the sequence is AAA.

Belongs to the TRAFAC class translation factor GTPase superfamily. Classic translation factor GTPase family. EF-Tu/EF-1A subfamily.

It is found in the mitochondrion. Functionally, this protein promotes the GTP-dependent binding of aminoacyl-tRNA to the A-site of ribosomes during protein biosynthesis. The sequence is that of Elongation factor Tu, mitochondrial (tufm) from Dictyostelium discoideum (Social amoeba).